A 316-amino-acid polypeptide reads, in one-letter code: 4-hydroxy-3-methylbut-2-enyl diphosphate reductase (316 aa).

A [4Fe-4S] cluster-binding site is contributed by C12. (2E)-4-hydroxy-3-methylbut-2-enyl diphosphate contacts are provided by H41 and H74. Residues H41 and H74 each contribute to the dimethylallyl diphosphate site. Residues H41 and H74 each contribute to the isopentenyl diphosphate site. C96 contributes to the [4Fe-4S] cluster binding site. (2E)-4-hydroxy-3-methylbut-2-enyl diphosphate is bound at residue H124. A dimethylallyl diphosphate-binding site is contributed by H124. H124 contributes to the isopentenyl diphosphate binding site. Catalysis depends on E126, which acts as the Proton donor. A (2E)-4-hydroxy-3-methylbut-2-enyl diphosphate-binding site is contributed by T167. Residue C197 participates in [4Fe-4S] cluster binding. Positions 225, 226, 227, and 269 each coordinate (2E)-4-hydroxy-3-methylbut-2-enyl diphosphate. Residues S225, S226, N227, and S269 each coordinate dimethylallyl diphosphate. S225, S226, N227, and S269 together coordinate isopentenyl diphosphate.

This sequence belongs to the IspH family. In terms of assembly, homodimer. [4Fe-4S] cluster is required as a cofactor.

The enzyme catalyses isopentenyl diphosphate + 2 oxidized [2Fe-2S]-[ferredoxin] + H2O = (2E)-4-hydroxy-3-methylbut-2-enyl diphosphate + 2 reduced [2Fe-2S]-[ferredoxin] + 2 H(+). It catalyses the reaction dimethylallyl diphosphate + 2 oxidized [2Fe-2S]-[ferredoxin] + H2O = (2E)-4-hydroxy-3-methylbut-2-enyl diphosphate + 2 reduced [2Fe-2S]-[ferredoxin] + 2 H(+). It functions in the pathway isoprenoid biosynthesis; dimethylallyl diphosphate biosynthesis; dimethylallyl diphosphate from (2E)-4-hydroxy-3-methylbutenyl diphosphate: step 1/1. The protein operates within isoprenoid biosynthesis; isopentenyl diphosphate biosynthesis via DXP pathway; isopentenyl diphosphate from 1-deoxy-D-xylulose 5-phosphate: step 6/6. In terms of biological role, catalyzes the conversion of 1-hydroxy-2-methyl-2-(E)-butenyl 4-diphosphate (HMBPP) into a mixture of isopentenyl diphosphate (IPP) and dimethylallyl diphosphate (DMAPP). Acts in the terminal step of the DOXP/MEP pathway for isoprenoid precursor biosynthesis. This chain is 4-hydroxy-3-methylbut-2-enyl diphosphate reductase, found in Sodalis glossinidius (strain morsitans).